Consider the following 107-residue polypeptide: Flagellar hook-basal body complex protein FliE (107 aa).

The protein belongs to the FliE family.

Its subcellular location is the bacterial flagellum basal body. The protein is Flagellar hook-basal body complex protein FliE of Sodalis glossinidius (strain morsitans).